The chain runs to 240 residues: MASLKRSNDRKVTNYVHVTKGGNATVGIANSIGLPSGQGFSCPDATAFCAKVCYAGKLEKVRKAVSSVLLHNWELLRDADLTDTVTLLSEMMADFVKDCDKKKAPKLFRIHWDGDFFSPTYVAAWARVIRDFSDVQFWAYTRVQTAAVYLHAQKLSNLSLYFSADPDNVDVARFLEGKGINIAYVDTTFAEGKAQFPTAVRCPELNNRDFDLINAKGSACARCGLCINGRKSVLFSTTKK.

In Mycobacterium phage D29 (Mycobacteriophage D29), this protein is Gene 88 protein (88).